We begin with the raw amino-acid sequence, 105 residues long: DNA-binding protein HU (105 aa).

This sequence belongs to the bacterial histone-like protein family.

In terms of biological role, histone-like DNA-binding protein which is capable of wrapping DNA to stabilize it, and thus to prevent its denaturation under extreme environmental conditions. The polypeptide is DNA-binding protein HU (hup) (Treponema pallidum (strain Nichols)).